A 531-amino-acid polypeptide reads, in one-letter code: RCC1 and BTB domain-containing protein 1 (531 aa).

RCC1 repeat units lie at residues 40-91, 93-145, 147-198, 199-250, 252-302, and 304-356; these read NDEV…LLST, DGVV…ALAA, GEVF…AVLD, NGEV…ALTD, GLLY…AAKT, and GGHV…FLTV. BTB domains lie at 370-437 and 470-499; these read ADLK…DLPP and ENAF…INHL.

In terms of tissue distribution, ubiquitously expressed. In the retina, present in the nerve fiber layer and to a lesser extent in the inner and outer plexiform layers (at protein level).

It is found in the nucleus. Functionally, may be involved in cell cycle regulation by chromatin remodeling. The chain is RCC1 and BTB domain-containing protein 1 (RCBTB1) from Homo sapiens (Human).